Consider the following 110-residue polypeptide: T cell receptor alpha variable 39 (110 aa).

An N-terminal signal peptide occupies residues M1–G18. The Ig-like domain maps to E19–D110. N-linked (GlcNAc...) asparagine glycans are attached at residues N36 and N42. A disulfide bond links C41 and C107.

As to quaternary structure, alpha-beta TR is a heterodimer composed of an alpha and beta chain; disulfide-linked. The alpha-beta TR is associated with the transmembrane signaling CD3 coreceptor proteins to form the TR-CD3 (TcR or TCR). The assembly of alpha-beta TR heterodimers with CD3 occurs in the endoplasmic reticulum where a single alpha-beta TR heterodimer associates with one CD3D-CD3E heterodimer, one CD3G-CD3E heterodimer and one CD247 homodimer forming a stable octameric structure. CD3D-CD3E and CD3G-CD3E heterodimers preferentially associate with TR alpha and TR beta chains, respectively. The association of the CD247 homodimer is the last step of TcR assembly in the endoplasmic reticulum and is required for transport to the cell surface.

It localises to the cell membrane. V region of the variable domain of T cell receptor (TR) alpha chain that participates in the antigen recognition. Alpha-beta T cell receptors are antigen specific receptors which are essential to the immune response and are present on the cell surface of T lymphocytes. Recognize peptide-major histocompatibility (MH) (pMH) complexes that are displayed by antigen presenting cells (APC), a prerequisite for efficient T cell adaptive immunity against pathogens. Binding of alpha-beta TR to pMH complex initiates TR-CD3 clustering on the cell surface and intracellular activation of LCK that phosphorylates the ITAM motifs of CD3G, CD3D, CD3E and CD247 enabling the recruitment of ZAP70. In turn ZAP70 phosphorylates LAT, which recruits numerous signaling molecules to form the LAT signalosome. The LAT signalosome propagates signal branching to three major signaling pathways, the calcium, the mitogen-activated protein kinase (MAPK) kinase and the nuclear factor NF-kappa-B (NF-kB) pathways, leading to the mobilization of transcription factors that are critical for gene expression and essential for T cell growth and differentiation. The T cell repertoire is generated in the thymus, by V-(D)-J rearrangement. This repertoire is then shaped by intrathymic selection events to generate a peripheral T cell pool of self-MH restricted, non-autoaggressive T cells. Post-thymic interaction of alpha-beta TR with the pMH complexes shapes TR structural and functional avidity. The protein is T cell receptor alpha variable 39 of Homo sapiens (Human).